Consider the following 483-residue polypeptide: Glycogen synthase (483 aa).

K15 lines the ADP-alpha-D-glucose pocket.

Belongs to the glycosyltransferase 1 family. Bacterial/plant glycogen synthase subfamily.

The enzyme catalyses [(1-&gt;4)-alpha-D-glucosyl](n) + ADP-alpha-D-glucose = [(1-&gt;4)-alpha-D-glucosyl](n+1) + ADP + H(+). Its pathway is glycan biosynthesis; glycogen biosynthesis. In terms of biological role, synthesizes alpha-1,4-glucan chains using ADP-glucose. The polypeptide is Glycogen synthase (Alkalilimnicola ehrlichii (strain ATCC BAA-1101 / DSM 17681 / MLHE-1)).